Here is a 363-residue protein sequence, read N- to C-terminus: Phosphoserine aminotransferase (363 aa).

Arginine 42 serves as a coordination point for L-glutamate. Pyridoxal 5'-phosphate contacts are provided by residues 76–77 (GR), tryptophan 102, threonine 156, aspartate 175, and glutamine 198. Position 199 is an N6-(pyridoxal phosphate)lysine (lysine 199). Residue 240–241 (NT) participates in pyridoxal 5'-phosphate binding.

It belongs to the class-V pyridoxal-phosphate-dependent aminotransferase family. SerC subfamily. As to quaternary structure, homodimer. Pyridoxal 5'-phosphate is required as a cofactor.

It is found in the cytoplasm. It carries out the reaction O-phospho-L-serine + 2-oxoglutarate = 3-phosphooxypyruvate + L-glutamate. The catalysed reaction is 4-(phosphooxy)-L-threonine + 2-oxoglutarate = (R)-3-hydroxy-2-oxo-4-phosphooxybutanoate + L-glutamate. The protein operates within amino-acid biosynthesis; L-serine biosynthesis; L-serine from 3-phospho-D-glycerate: step 2/3. Its pathway is cofactor biosynthesis; pyridoxine 5'-phosphate biosynthesis; pyridoxine 5'-phosphate from D-erythrose 4-phosphate: step 3/5. In terms of biological role, catalyzes the reversible conversion of 3-phosphohydroxypyruvate to phosphoserine and of 3-hydroxy-2-oxo-4-phosphonooxybutanoate to phosphohydroxythreonine. The protein is Phosphoserine aminotransferase of Shewanella baltica (strain OS185).